Reading from the N-terminus, the 332-residue chain is Ribosomal RNA small subunit methyltransferase C (332 aa).

It belongs to the methyltransferase superfamily. RsmC family. Monomer.

It is found in the cytoplasm. The enzyme catalyses guanosine(1207) in 16S rRNA + S-adenosyl-L-methionine = N(2)-methylguanosine(1207) in 16S rRNA + S-adenosyl-L-homocysteine + H(+). In terms of biological role, specifically methylates the guanine in position 1207 of 16S rRNA in the 30S particle. In Pseudomonas syringae pv. tomato (strain ATCC BAA-871 / DC3000), this protein is Ribosomal RNA small subunit methyltransferase C.